A 513-amino-acid polypeptide reads, in one-letter code: Type-2 serine--tRNA ligase (513 aa).

Alanine 312 is an L-serine binding site. Cysteine 314 serves as a coordination point for Zn(2+). Position 344 (arginine 344) interacts with L-serine. ATP contacts are provided by residues 344–346 (RWE) and 355–356 (RV). Residue 361–363 (RVE) coordinates L-serine. The Zn(2+) site is built by glutamate 363 and cysteine 467. Arginine 474 is a binding site for ATP.

This sequence belongs to the class-II aminoacyl-tRNA synthetase family. Type-2 seryl-tRNA synthetase subfamily. Homodimer. The cofactor is Zn(2+).

The protein resides in the cytoplasm. It carries out the reaction tRNA(Ser) + L-serine + ATP = L-seryl-tRNA(Ser) + AMP + diphosphate + H(+). It catalyses the reaction tRNA(Sec) + L-serine + ATP = L-seryl-tRNA(Sec) + AMP + diphosphate + H(+). It functions in the pathway aminoacyl-tRNA biosynthesis; selenocysteinyl-tRNA(Sec) biosynthesis; L-seryl-tRNA(Sec) from L-serine and tRNA(Sec): step 1/1. Catalyzes the attachment of serine to tRNA(Ser). Is also able to aminoacylate tRNA(Sec) with serine, to form the misacylated tRNA L-seryl-tRNA(Sec), which will be further converted into selenocysteinyl-tRNA(Sec). The chain is Type-2 serine--tRNA ligase (serS) from Methanothermobacter thermautotrophicus (strain ATCC 29096 / DSM 1053 / JCM 10044 / NBRC 100330 / Delta H) (Methanobacterium thermoautotrophicum).